The chain runs to 613 residues: MVISKQYHQEIEDFVFNLVHKYEDQQRDEQEKTHFSLKPQPSSVVLEEDYKTASSNSVKKIKEAFSVVGSVLYFTNFCLDKLGQPILNENPQLTEGWEIPKYQQVFSQILSLDGQEIQVKPKRPKSHCFNCGSEEHQIKDCPKPRNAARISEKRKEFMEAYGEASNQNFQQRYHAEEVEERFGKFKPGVISGELQDALGVTAKSLPPFIYRMRQLGYPPGWLKEAEMEHSGLALYDGKDDNETEDEGYLQPKHVTYDVSKLINYPGFNISTPSGIPDEWQIFGSIPMQPSQQKDVFAHYLSNFHAPSSKSSNKRTAPQPSSHHSKRPKDDLEVAVADMDIDSDVEVSQRSQTTNSFQFQPPLPPGPPVISTPPPLPQGTPPLTPRSLTPTQPSTPTHPPLPNTVSSLNPSSDVSQPKIVDSTMDEDTLTLEELEEQQRLIWAALEQAESTNSDSDIPVDTPLTGNSVTSSPSRNEVDVVAEVRSDKMVTLETKFSSISEQVPENEHSLTSPNPDNSSLNLKEIPDNSDSEGLLDNTVPAPNHEVNDGESIVDNKVVTSTESSAKNSNPVPDMSKFAVGIAPFEFENMTESTGTYLRIRSVLKNSPRNQQKKKT.

Residues 126-143 (SHCFNCGSEEHQIKDCPK) form a CCHC-type zinc finger. 2 stretches are compositionally biased toward polar residues: residues 304–321 (HAPS…QPSS) and 345–358 (EVSQ…SFQF). Disordered stretches follow at residues 304 to 330 (HAPS…PKDD), 344 to 417 (VEVS…SQPK), 448 to 473 (ESTN…SPSR), and 494 to 546 (FSSI…EVND). Positions 360-383 (PPLPPGPPVISTPPPLPQGTPPLT) are enriched in pro residues. Low complexity predominate over residues 384–394 (PRSLTPTQPST). Positions 404–414 (VSSLNPSSDVS) are enriched in polar residues. Residues 431–451 (EELEEQQRLIWAALEQAESTN) are a coiled coil. Polar residues-rich tracts occupy residues 462-473 (LTGNSVTSSPSR) and 494-519 (FSSI…SSLN).

The protein belongs to the ZCCHC8 family.

Its subcellular location is the nucleus. The protein resides in the nucleoplasm. Its function is as follows. Scaffolding subunit of the trimeric nuclear exosome targeting (NEXT) complex that is involved in the surveillance and turnover of aberrant transcripts and non-coding RNAs. NEXT functions as an RNA exosome cofactor that directs a subset of non-coding short-lived RNAs for exosomal degradation. May be involved in pre-mRNA splicing. It is required for 3'-end maturation of telomerase RNA component (TERC), TERC 3'-end targeting to the nuclear RNA exosome, and for telomerase function. In Gallus gallus (Chicken), this protein is Zinc finger CCHC domain-containing protein 8 (ZCCHC8).